Reading from the N-terminus, the 333-residue chain is Probable tRNA pseudouridine synthase B (333 aa).

Catalysis depends on Asp66, which acts as the Nucleophile. Residues 233–308 form the PUA domain; that stretch reads LKKIIVKDSA…EVVEITRVIM (76 aa).

This sequence belongs to the pseudouridine synthase TruB family. Type 2 subfamily.

It catalyses the reaction uridine(55) in tRNA = pseudouridine(55) in tRNA. Functionally, could be responsible for synthesis of pseudouridine from uracil-55 in the psi GC loop of transfer RNAs. This is Probable tRNA pseudouridine synthase B from Methanococcus maripaludis (strain C5 / ATCC BAA-1333).